Reading from the N-terminus, the 786-residue chain is Succinoglycan biosynthesis transport protein ExoP (786 aa).

The Cytoplasmic portion of the chain corresponds to 1–42; the sequence is MNRTAPMKQRSVPLSSIMPSEEQSDGFIDLDRLVAAVFRRAR. A helical membrane pass occupies residues 43–66; sequence LVAAFVVLFIALGAAYLLFATPYY. The Periplasmic segment spans residues 67–689; sequence TSMTQILLDE…LIENARNAFD (623 aa). 583-590 serves as a coordination point for ATP; sequence ALPDEGKS. The helical transmembrane segment at 690–711 threads the bilayer; sequence YVVVDLAALAPVVDAKAFAPLA. The Cytoplasmic segment spans residues 712 to 786; that stretch reads DGILFVVEWG…ENTITENTAA (75 aa).

It to B.solanacearum EpsB.

The protein resides in the cell membrane. It participates in glycan metabolism; exopolysaccharide biosynthesis. The chain is Succinoglycan biosynthesis transport protein ExoP (exoP) from Rhizobium meliloti (strain 1021) (Ensifer meliloti).